Reading from the N-terminus, the 31-residue chain is uncharacterized protein (31 aa).

This is an uncharacterized protein from Chlamydia phage 1 (Bacteriophage Chp1).